Reading from the N-terminus, the 167-residue chain is Translationally-controlled tumor protein homolog (167 aa).

The region spanning 1-167 (MIIYKDIFSN…WKHGIVEEKI (167 aa)) is the TCTP domain. Phosphoserine occurs at positions 9 and 15.

The protein belongs to the TCTP family. In terms of assembly, interacts with the 40S and 60S ribosomal subunits. Interacts with microtubules.

Its subcellular location is the cytoplasm. It localises to the cytoskeleton. It is found in the mitochondrion. Functionally, involved in protein synthesis. Involved in microtubule stabilization. This is Translationally-controlled tumor protein homolog (TMA19) from Saccharomyces cerevisiae (strain ATCC 204508 / S288c) (Baker's yeast).